Here is a 710-residue protein sequence, read N- to C-terminus: Secretin OutD (710 aa).

A signal peptide spans 1–27 (MLGKGIKKSWGWLGLTVLLLGSPCGWA). The N0 stretch occupies residues 28-105 (AEFSASFKGT…DNGVLKVIRS (78 aa)). Residues 123–190 (IGDELVTRVV…DIVNTVDKTG (68 aa)) form an N1 region. Residues 192-262 (REMVTVPLTY…VEMIRQLDRK (71 aa)) are N2. The N3 stretch occupies residues 288–399 (GNGTSGNRNS…INQLDIRRPQ (112 aa)). A disordered region spans residues 289-353 (NGTSGNRNSS…AFGSTSSSGG (65 aa)). The secretin stretch occupies residues 401–648 (LVEAIIAEIQ…MLFLRPTIIR (248 aa)). The segment at 691 to 710 (TYTFRQVQSSISDFYKPEGR) is s domain.

It belongs to the bacterial secretin family. GSP D subfamily. In terms of assembly, forms a cylindrical channel with 15 subunits. Interacts with pilotin OutS.

Its subcellular location is the cell outer membrane. Functionally, involved in a type II secretion system (T2SS, formerly general secretion pathway, GSP) for the export of proteins. Required for the translocation of the multiple pectic enzymes. This subunit forms the outer membrane channel. The chain is Secretin OutD (outD) from Dickeya dadantii (strain 3937) (Erwinia chrysanthemi (strain 3937)).